The chain runs to 214 residues: Endothelin-3 (214 aa).

An N-terminal signal peptide occupies residues 1-16; that stretch reads MEPGLWLLLGLTVTSA. The propeptide occupies 17–94; it reads AGLVPCPQSG…DKGLPAHHRP (78 aa). The disordered stretch occupies residues 24–91; that stretch reads QSGDSGRASV…KQEDKGLPAH (68 aa). A compositionally biased stretch (polar residues) spans 25-35; it reads SGDSGRASVSQ. Disulfide bonds link cysteine 97–cysteine 111 and cysteine 99–cysteine 107. Residues 118–214 constitute a propeptide that is removed on maturation; the sequence is INTPEQTVPY…MSRTDKAHRP (97 aa). The endothelin-like stretch occupies residues 159–173; it reads CTCMGADDKACAHFC. The disordered stretch occupies residues 183-214; sequence SGRAERPAAEEMRETGGPRQRLMSRTDKAHRP. A compositionally biased stretch (basic and acidic residues) spans 185–198; sequence RAERPAAEEMRETG.

Belongs to the endothelin/sarafotoxin family.

It is found in the secreted. Functionally, endothelins are endothelium-derived vasoconstrictor peptides. This Mus musculus (Mouse) protein is Endothelin-3 (Edn3).